Reading from the N-terminus, the 240-residue chain is UDP-2,3-diacylglucosamine hydrolase (240 aa).

Mn(2+) is bound by residues D9, H11, D43, N81, and H116. 81–82 (NR) lines the substrate pocket. Substrate is bound by residues D124, S162, K166, K169, and H197. Residues H197 and H199 each coordinate Mn(2+).

Belongs to the LpxH family. Mn(2+) is required as a cofactor.

It is found in the cell inner membrane. It catalyses the reaction UDP-2-N,3-O-bis[(3R)-3-hydroxytetradecanoyl]-alpha-D-glucosamine + H2O = 2-N,3-O-bis[(3R)-3-hydroxytetradecanoyl]-alpha-D-glucosaminyl 1-phosphate + UMP + 2 H(+). It functions in the pathway glycolipid biosynthesis; lipid IV(A) biosynthesis; lipid IV(A) from (3R)-3-hydroxytetradecanoyl-[acyl-carrier-protein] and UDP-N-acetyl-alpha-D-glucosamine: step 4/6. Functionally, hydrolyzes the pyrophosphate bond of UDP-2,3-diacylglucosamine to yield 2,3-diacylglucosamine 1-phosphate (lipid X) and UMP by catalyzing the attack of water at the alpha-P atom. Involved in the biosynthesis of lipid A, a phosphorylated glycolipid that anchors the lipopolysaccharide to the outer membrane of the cell. The sequence is that of UDP-2,3-diacylglucosamine hydrolase from Neisseria gonorrhoeae (strain ATCC 700825 / FA 1090).